We begin with the raw amino-acid sequence, 468 residues long: Tumor necrosis factor receptor superfamily member 10A (468 aa).

A signal peptide spans 1-23; sequence MAPPPARVHLGAFLAVTPNPGSA. The disordered stretch occupies residues 17 to 82; that stretch reads TPNPGSAASG…APGPRPAREA (66 aa). Low complexity predominate over residues 20–34; that stretch reads PGSAASGTEAAAATP. The Extracellular segment spans residues 24 to 239; sequence ASGTEAAAAT…VHKESGNGHN (216 aa). At Arg-52 the chain carries Omega-N-methylarginine. A compositionally biased stretch (low complexity) spans 63 to 74; that stretch reads GPSARARAGRAP. TNFR-Cys repeat units follow at residues 107–145, 147–188, and 189–229; these read SAAT…PGAC, RCTE…NTAC, and QCKP…DIEC. 7 disulfides stabilise this stretch: Cys-132–Cys-145, Cys-148–Cys-164, Cys-167–Cys-180, Cys-170–Cys-188, Cys-190–Cys-204, Cys-207–Cys-221, and Cys-211–Cys-229. Asn-156 carries an N-linked (GlcNAc...) asparagine glycan. A helical transmembrane segment spans residues 240–262; the sequence is IWVILVVTLVVPLLLVAVLIVCC. At 263-468 the chain is on the cytoplasmic side; that stretch reads CIGSGCGGDP…DGTGSAVSLE (206 aa). The Death domain occupies 365 to 448; that stretch reads MLFFDKFANI…HAREKIQDLL (84 aa). Residues Ser-424, Ser-463, and Ser-466 each carry the phosphoserine modification.

In terms of assembly, monomer. Homooligomers and heterooligomers with TNFRSF10B. Three TNFRSF10A molecules interact with the TNFSF10 homotrimer. Can interact with TRADD and RIPK1. Interacts with ARAP1. In the absence of stimulation, interacts with BIRC2, DDX3X and GSK3B. The interaction with BIRC2 and DDX3X is further enhanced upon receptor stimulation and accompanied by DDX3X and BIRC2 cleavage. Interacts with ZDHHC3. Interacts with PTPN6; this interaction enables the inhibition of T-cell receptor signaling via LCK. As to quaternary structure, (Microbial infection) Interacts with HCMV protein UL141; this interaction prevents TNFRSF10A cell surface expression. In terms of processing, palmitoylated. Palmitoylation of TNFRSF10A is required for its association with lipid rafts, oligomerization and function in TRAIL-induced cell death. Palmitoylated by ZDHHC3. Widely expressed. High levels are found in spleen, peripheral blood leukocytes, small intestine and thymus, but also in K-562 erythroleukemia cells, MCF-7 breast carcinoma cells and activated T-cells.

The protein localises to the cell membrane. It localises to the membrane raft. Its subcellular location is the cytoplasm. It is found in the cytosol. Functionally, receptor for the cytotoxic ligand TNFSF10/TRAIL. The adapter molecule FADD recruits caspase-8 to the activated receptor. The resulting death-inducing signaling complex (DISC) performs caspase-8 proteolytic activation which initiates the subsequent cascade of caspases (aspartate-specific cysteine proteases) mediating apoptosis. Promotes the activation of NF-kappa-B. This Homo sapiens (Human) protein is Tumor necrosis factor receptor superfamily member 10A (TNFRSF10A).